We begin with the raw amino-acid sequence, 222 residues long: Protein-L-isoaspartate O-methyltransferase (222 aa).

Serine 72 is a catalytic residue.

It belongs to the methyltransferase superfamily. L-isoaspartyl/D-aspartyl protein methyltransferase family.

It localises to the cytoplasm. The catalysed reaction is [protein]-L-isoaspartate + S-adenosyl-L-methionine = [protein]-L-isoaspartate alpha-methyl ester + S-adenosyl-L-homocysteine. Functionally, catalyzes the methyl esterification of L-isoaspartyl residues in peptides and proteins that result from spontaneous decomposition of normal L-aspartyl and L-asparaginyl residues. It plays a role in the repair and/or degradation of damaged proteins. The chain is Protein-L-isoaspartate O-methyltransferase from Picosynechococcus sp. (strain ATCC 27264 / PCC 7002 / PR-6) (Agmenellum quadruplicatum).